The sequence spans 243 residues: uncharacterized protein (243 aa).

The 239-residue stretch at 2 to 240 folds into the GP-PDE domain; the sequence is TKIFAHRGAS…DFPEKASALL (239 aa).

This is an uncharacterized protein from Bacillus subtilis (strain 168).